An 852-amino-acid polypeptide reads, in one-letter code: Serine/threonine-protein kinase pakB (852 aa).

A disordered region spans residues 1–334 (MEQSKRVSMM…NVGNKQDEEK (334 aa)). A Phosphoserine; by autocatalysis modification is found at S8. The segment covering 24–35 (SPPPNRKPPPPN) has biased composition (pro residues). Over residues 44 to 56 (SSLNSSGSSFVSP) the composition is skewed to low complexity. Residues 57 to 74 (SPSPSPSPQQPVKRPLPS) are compositionally biased toward pro residues. Composition is skewed to low complexity over residues 90 to 117 (RPQQ…NSNG) and 124 to 163 (FSSS…GSSN). Residues 181-191 (TPPPPPQPTPS) are compositionally biased toward pro residues. Residues 201-210 (ASHNNTQHNI) show a composition bias toward polar residues. Low complexity-rich tracts occupy residues 246–270 (SPGS…STPI) and 293–317 (SNSN…ATTS). The CRIB domain maps to 356-369 (VGSPFNVKHNIHVN). Positions 419 to 433 (AQQEQQALMQKQMQQ) are enriched in low complexity. The interval 419-526 (AQQEQQALMQ…GILSQQQEQQ (108 aa)) is disordered. The segment covering 470 to 485 (PQHHHQQQPPQQHHHQ) has biased composition (basic residues). Positions 486 to 514 (QQQQQHNNNNNNNNNNNNNNNNQQSAQQQ) are enriched in low complexity. The 254-residue stretch at 570 to 823 (GEGSTKIGEG…AKVLLNHPFL (254 aa)) folds into the Protein kinase domain. Residues 576 to 584 (IGEGAAGEV) and K599 contribute to the ATP site. D691 (proton acceptor) is an active-site residue.

The protein belongs to the protein kinase superfamily. STE Ser/Thr protein kinase family. STE20 subfamily. In terms of assembly, interacts with rac1A, rac1B, rac1C, racA, racB, racC and racF1. Mg(2+) serves as cofactor. Autophosphorylated at Ser-8. This may stimulate interaction with GTP-bound Rac family members which then further stimulates autophosphorylation and kinase activity.

It is found in the membrane. Its subcellular location is the cytoplasm. It localises to the cytoskeleton. The enzyme catalyses L-seryl-[protein] + ATP = O-phospho-L-seryl-[protein] + ADP + H(+). It catalyses the reaction L-threonyl-[protein] + ATP = O-phospho-L-threonyl-[protein] + ADP + H(+). In terms of biological role, regulator of the myosin I component of the cytoskeleton: required for regulation of cytokinesis, phagocytosis and pinocytosis. This Dictyostelium discoideum (Social amoeba) protein is Serine/threonine-protein kinase pakB.